The sequence spans 397 residues: Acetate kinase (397 aa).

Residue Asn8 coordinates Mg(2+). Lys15 contacts ATP. Residue Arg89 participates in substrate binding. The active-site Proton donor/acceptor is Asp146. ATP-binding positions include 206 to 210 (HLGNG), 281 to 283 (DLR), and 329 to 333 (GIGEN). Residue Glu382 coordinates Mg(2+).

The protein belongs to the acetokinase family. Homodimer. The cofactor is Mg(2+). Mn(2+) serves as cofactor.

It localises to the cytoplasm. The catalysed reaction is acetate + ATP = acetyl phosphate + ADP. It participates in metabolic intermediate biosynthesis; acetyl-CoA biosynthesis; acetyl-CoA from acetate: step 1/2. Catalyzes the formation of acetyl phosphate from acetate and ATP. Can also catalyze the reverse reaction. This Bacillus cytotoxicus (strain DSM 22905 / CIP 110041 / 391-98 / NVH 391-98) protein is Acetate kinase.